We begin with the raw amino-acid sequence, 416 residues long: Serine hydroxymethyltransferase (416 aa).

(6S)-5,6,7,8-tetrahydrofolate is bound by residues Leu120 and 124–126 (GHL). At Lys230 the chain carries N6-(pyridoxal phosphate)lysine. Residue Glu246 coordinates (6S)-5,6,7,8-tetrahydrofolate.

The protein belongs to the SHMT family. Homodimer. Pyridoxal 5'-phosphate is required as a cofactor.

The protein resides in the cytoplasm. It carries out the reaction (6R)-5,10-methylene-5,6,7,8-tetrahydrofolate + glycine + H2O = (6S)-5,6,7,8-tetrahydrofolate + L-serine. Its pathway is one-carbon metabolism; tetrahydrofolate interconversion. The protein operates within amino-acid biosynthesis; glycine biosynthesis; glycine from L-serine: step 1/1. Its function is as follows. Catalyzes the reversible interconversion of serine and glycine with tetrahydrofolate (THF) serving as the one-carbon carrier. This reaction serves as the major source of one-carbon groups required for the biosynthesis of purines, thymidylate, methionine, and other important biomolecules. Also exhibits THF-independent aldolase activity toward beta-hydroxyamino acids, producing glycine and aldehydes, via a retro-aldol mechanism. The chain is Serine hydroxymethyltransferase from Onion yellows phytoplasma (strain OY-M).